The following is a 271-amino-acid chain: ATP synthase subunit delta (271 aa).

The protein belongs to the ATPase delta chain family. As to quaternary structure, F-type ATPases have 2 components, F(1) - the catalytic core - and F(0) - the membrane proton channel. F(1) has five subunits: alpha(3), beta(3), gamma(1), delta(1), epsilon(1). F(0) has three main subunits: a(1), b(2) and c(10-14). The alpha and beta chains form an alternating ring which encloses part of the gamma chain. F(1) is attached to F(0) by a central stalk formed by the gamma and epsilon chains, while a peripheral stalk is formed by the delta and b chains.

The protein localises to the cell membrane. Its function is as follows. F(1)F(0) ATP synthase produces ATP from ADP in the presence of a proton or sodium gradient. F-type ATPases consist of two structural domains, F(1) containing the extramembraneous catalytic core and F(0) containing the membrane proton channel, linked together by a central stalk and a peripheral stalk. During catalysis, ATP synthesis in the catalytic domain of F(1) is coupled via a rotary mechanism of the central stalk subunits to proton translocation. Functionally, this protein is part of the stalk that links CF(0) to CF(1). It either transmits conformational changes from CF(0) to CF(1) or is implicated in proton conduction. This Corynebacterium aurimucosum (strain ATCC 700975 / DSM 44827 / CIP 107346 / CN-1) (Corynebacterium nigricans) protein is ATP synthase subunit delta.